A 163-amino-acid polypeptide reads, in one-letter code: 6,7-dimethyl-8-ribityllumazine synthase (163 aa).

Residues phenylalanine 27, 58–60 (ALE), and 87–89 (CVV) contribute to the 5-amino-6-(D-ribitylamino)uracil site. (2S)-2-hydroxy-3-oxobutyl phosphate is bound at residue 92–93 (DT). Residue histidine 95 is the Proton donor of the active site. Asparagine 120 contributes to the 5-amino-6-(D-ribitylamino)uracil binding site. Arginine 134 lines the (2S)-2-hydroxy-3-oxobutyl phosphate pocket.

The protein belongs to the DMRL synthase family.

The catalysed reaction is (2S)-2-hydroxy-3-oxobutyl phosphate + 5-amino-6-(D-ribitylamino)uracil = 6,7-dimethyl-8-(1-D-ribityl)lumazine + phosphate + 2 H2O + H(+). The protein operates within cofactor biosynthesis; riboflavin biosynthesis; riboflavin from 2-hydroxy-3-oxobutyl phosphate and 5-amino-6-(D-ribitylamino)uracil: step 1/2. Catalyzes the formation of 6,7-dimethyl-8-ribityllumazine by condensation of 5-amino-6-(D-ribitylamino)uracil with 3,4-dihydroxy-2-butanone 4-phosphate. This is the penultimate step in the biosynthesis of riboflavin. The sequence is that of 6,7-dimethyl-8-ribityllumazine synthase from Rhodopseudomonas palustris (strain BisA53).